A 266-amino-acid polypeptide reads, in one-letter code: UPF0294 protein YafD (266 aa).

It belongs to the UPF0294 family.

The protein localises to the cytoplasm. The chain is UPF0294 protein YafD from Shigella dysenteriae serotype 1 (strain Sd197).